A 201-amino-acid polypeptide reads, in one-letter code: Riboflavin synthase (201 aa).

Lumazine-binding repeat units follow at residues 1-97 (MFTG…LGGH) and 98-197 (IVQG…ERLM). 2,4-dihydroxypteridine contacts are provided by residues 4-6 (GIV), 47-49 (CLT), 62-67 (DVMAET), 101-103 (GHV), K136, 145-147 (SLT), and 162-167 (SLIPTT).

As to quaternary structure, homotrimer.

The enzyme catalyses 2 6,7-dimethyl-8-(1-D-ribityl)lumazine + H(+) = 5-amino-6-(D-ribitylamino)uracil + riboflavin. Its pathway is cofactor biosynthesis; riboflavin biosynthesis; riboflavin from 2-hydroxy-3-oxobutyl phosphate and 5-amino-6-(D-ribitylamino)uracil: step 2/2. In terms of biological role, catalyzes the dismutation of two molecules of 6,7-dimethyl-8-ribityllumazine, resulting in the formation of riboflavin and 5-amino-6-(D-ribitylamino)uracil. This is Riboflavin synthase (ribE) from Mycobacterium bovis (strain ATCC BAA-935 / AF2122/97).